The primary structure comprises 360 residues: Peptide chain release factor 1 (360 aa).

Gln236 carries the N5-methylglutamine modification.

Belongs to the prokaryotic/mitochondrial release factor family. In terms of processing, methylated by PrmC. Methylation increases the termination efficiency of RF1.

It is found in the cytoplasm. Peptide chain release factor 1 directs the termination of translation in response to the peptide chain termination codons UAG and UAA. In Lactiplantibacillus plantarum (strain ATCC BAA-793 / NCIMB 8826 / WCFS1) (Lactobacillus plantarum), this protein is Peptide chain release factor 1.